A 59-amino-acid chain; its full sequence is Chromatin protein Cren7 (59 aa).

The protein belongs to the Cren7 family. As to quaternary structure, monomer. Methylated at multiple sites, to varying extents.

It is found in the chromosome. The protein localises to the cytoplasm. A chromatin protein, binds double-stranded DNA without sequence specificity. Constrains negative DNA supercoils. This Pyrobaculum arsenaticum (strain DSM 13514 / JCM 11321 / PZ6) protein is Chromatin protein Cren7.